A 442-amino-acid chain; its full sequence is 3-phosphoshikimate 1-carboxyvinyltransferase (442 aa).

3-phosphoshikimate is bound by residues Lys25, Ser26, and Arg30. Lys25 contributes to the phosphoenolpyruvate binding site. Residues Gly96 and Arg124 each contribute to the phosphoenolpyruvate site. Residues Ser171, Ser172, Gln173, Ser203, Asp325, and Lys352 each coordinate 3-phosphoshikimate. A phosphoenolpyruvate-binding site is contributed by Gln173. The active-site Proton acceptor is Asp325. Phosphoenolpyruvate is bound by residues Arg356, Arg400, and Lys425.

The protein belongs to the EPSP synthase family. As to quaternary structure, monomer.

It is found in the cytoplasm. It carries out the reaction 3-phosphoshikimate + phosphoenolpyruvate = 5-O-(1-carboxyvinyl)-3-phosphoshikimate + phosphate. It functions in the pathway metabolic intermediate biosynthesis; chorismate biosynthesis; chorismate from D-erythrose 4-phosphate and phosphoenolpyruvate: step 6/7. Catalyzes the transfer of the enolpyruvyl moiety of phosphoenolpyruvate (PEP) to the 5-hydroxyl of shikimate-3-phosphate (S3P) to produce enolpyruvyl shikimate-3-phosphate and inorganic phosphate. In Bordetella pertussis (strain Tohama I / ATCC BAA-589 / NCTC 13251), this protein is 3-phosphoshikimate 1-carboxyvinyltransferase.